Here is a 76-residue protein sequence, read N- to C-terminus: Kappa-actitoxin-Avd4n (76 aa).

An N-terminal signal peptide occupies residues 1-19 (MNKAFFLCLVVLCAAVVFA). Residues 20-31 (AEDLQKGKHAPF) constitute a propeptide that is removed on maturation. Disulfide bonds link Cys37–Cys72 and Cys39–Cys65.

Belongs to the sea anemone type 3 (BDS) potassium channel toxin family. Lacks the conventional Cys residue at position 55. Thus, only 2 disulfide are possible present. In terms of tissue distribution, experimental results show no expression in the ectodermal tissue from the distal and proximal tentacles, body wall, and oral disk. Since paralogs are expressed in this tissue, an expression of this toxin in this tissue is probable. The negative results could be explained by the very low abundance of EST sequences.

The protein resides in the secreted. Its subcellular location is the nematocyst. Its function is as follows. Blocks Kv3 voltage-gated potassium channels. Reduces blood pressure. This Anemonia viridis (Snakelocks anemone) protein is Kappa-actitoxin-Avd4n.